The following is a 70-amino-acid chain: Large ribosomal subunit protein uL29 (70 aa).

Belongs to the universal ribosomal protein uL29 family.

This is Large ribosomal subunit protein uL29 (rpl29) from Methanocaldococcus jannaschii (strain ATCC 43067 / DSM 2661 / JAL-1 / JCM 10045 / NBRC 100440) (Methanococcus jannaschii).